The primary structure comprises 476 residues: Transcriptional regulator claA (476 aa).

Residues 25-52 constitute a DNA-binding region (zn(2)-C6 fungal-type); the sequence is CDTCLKAKIKCSQAKPTCARCLQQGRQC. The tract at residues 63–92 is disordered; that stretch reads PSTKNLPLDQLQQPKGRTAGGTARRSLSRR. A compositionally biased stretch (polar residues) spans 64 to 77; it reads STKNLPLDQLQQPK.

It is found in the nucleus. In terms of biological role, transcriptional regulator; part of the cla gene cluster that produces clavatol and ortho-quinone methide. The clavatol biosynthesis cluster cla and the terrestric acid cluster tra are both involved in the production of peniphenones and penilactones. In Penicillium crustosum (Blue mold fungus), this protein is Transcriptional regulator claA.